Here is a 280-residue protein sequence, read N- to C-terminus: uncharacterized protein (280 aa).

3 helical membrane passes run 15-35, 68-88, and 94-114; these read IVDI…INRL, IGFI…ILAG, and IVIG…VFLI.

Belongs to the MscS (TC 1.A.23) family.

It is found in the cell membrane. May play a role in resistance to osmotic downshock. This is an uncharacterized protein from Bacillus subtilis (strain 168).